Reading from the N-terminus, the 64-residue chain is Protein DsrB (64 aa).

The protein belongs to the DsrB family.

This chain is Protein DsrB, found in Salmonella enteritidis PT4 (strain P125109).